A 413-amino-acid chain; its full sequence is Zeaxanthin glucosyltransferase (413 aa).

This sequence belongs to the UDP-glycosyltransferase family.

It catalyses the reaction all-trans-zeaxanthin + 2 UDP-alpha-D-glucose = zeaxanthin bis(beta-D-glucoside) + 2 UDP + 2 H(+). The protein operates within carotenoid biosynthesis; zeaxanthin diglucoside biosynthesis. Functionally, catalyzes the glycosylation reaction which converts zeaxanthin to zeaxanthin bis(beta-D-glucoside). The reaction proceeds in two steps with the monoglucoside as an intermediate. This Pseudescherichia vulneris (Escherichia vulneris) protein is Zeaxanthin glucosyltransferase (crtX).